A 138-amino-acid polypeptide reads, in one-letter code: Small ribosomal subunit protein bS6 (138 aa).

A disordered region spans residues 94 to 138 (VKQDGPLPTPKPTSKENEPEKEEVKPTEEKTESPSKDEKKEDSKE). Residues 106–138 (TSKENEPEKEEVKPTEEKTESPSKDEKKEDSKE) are compositionally biased toward basic and acidic residues.

Belongs to the bacterial ribosomal protein bS6 family.

Its function is as follows. Binds together with bS18 to 16S ribosomal RNA. The protein is Small ribosomal subunit protein bS6 of Prochlorococcus marinus (strain NATL2A).